Consider the following 211-residue polypeptide: Probable nicotinate-nucleotide adenylyltransferase (211 aa).

It belongs to the NadD family.

It carries out the reaction nicotinate beta-D-ribonucleotide + ATP + H(+) = deamido-NAD(+) + diphosphate. The protein operates within cofactor biosynthesis; NAD(+) biosynthesis; deamido-NAD(+) from nicotinate D-ribonucleotide: step 1/1. Its function is as follows. Catalyzes the reversible adenylation of nicotinate mononucleotide (NaMN) to nicotinic acid adenine dinucleotide (NaAD). This chain is Probable nicotinate-nucleotide adenylyltransferase, found in Corynebacterium kroppenstedtii (strain DSM 44385 / JCM 11950 / CIP 105744 / CCUG 35717).